An 82-amino-acid polypeptide reads, in one-letter code: Zinc finger CCCH domain-containing protein 13 (82 aa).

2 C3H1-type zinc fingers span residues R9–N37 and R55–T82.

The polypeptide is Zinc finger CCCH domain-containing protein 13 (Arabidopsis thaliana (Mouse-ear cress)).